The following is a 155-amino-acid chain: 2-C-methyl-D-erythritol 2,4-cyclodiphosphate synthase (155 aa).

Residues Asp-8 and His-10 each coordinate a divalent metal cation. 4-CDP-2-C-methyl-D-erythritol 2-phosphate is bound by residues Asp-8–His-10 and His-34–Ser-35. His-42 contributes to the a divalent metal cation binding site. Residues Asp-56–Gly-58, Phe-61–Asp-65, Thr-132–Glu-135, and Arg-142 each bind 4-CDP-2-C-methyl-D-erythritol 2-phosphate.

It belongs to the IspF family. In terms of assembly, homotrimer. It depends on a divalent metal cation as a cofactor.

The catalysed reaction is 4-CDP-2-C-methyl-D-erythritol 2-phosphate = 2-C-methyl-D-erythritol 2,4-cyclic diphosphate + CMP. The protein operates within isoprenoid biosynthesis; isopentenyl diphosphate biosynthesis via DXP pathway; isopentenyl diphosphate from 1-deoxy-D-xylulose 5-phosphate: step 4/6. In terms of biological role, involved in the biosynthesis of isopentenyl diphosphate (IPP) and dimethylallyl diphosphate (DMAPP), two major building blocks of isoprenoid compounds. Catalyzes the conversion of 4-diphosphocytidyl-2-C-methyl-D-erythritol 2-phosphate (CDP-ME2P) to 2-C-methyl-D-erythritol 2,4-cyclodiphosphate (ME-CPP) with a corresponding release of cytidine 5-monophosphate (CMP). The chain is 2-C-methyl-D-erythritol 2,4-cyclodiphosphate synthase from Desulfatibacillum aliphaticivorans.